The primary structure comprises 94 residues: UPF0235 protein TK0768 (94 aa).

The protein belongs to the UPF0235 family.

In Thermococcus kodakarensis (strain ATCC BAA-918 / JCM 12380 / KOD1) (Pyrococcus kodakaraensis (strain KOD1)), this protein is UPF0235 protein TK0768.